Here is a 153-residue protein sequence, read N- to C-terminus: Histone H2B type W-T (153 aa).

Residues methionine 1–cysteine 54 are disordered. Residues serine 11–glutamine 36 show a composition bias toward polar residues. Basic residues predominate over residues serine 37–serine 52.

Belongs to the histone H2B family. In terms of assembly, can replace the conventional histone H2B in the nucleosome. The nucleosome is a histone octamer containing two molecules each of H2A, H2B, H3 and H4 assembled in one H3-H4 heterotetramer and two H2A-H2B heterodimers. The octamer wraps approximately 147 bp of DNA. In terms of tissue distribution, testis-specific (at protein level).

It localises to the nucleus membrane. It is found in the chromosome. The protein localises to the telomere. In terms of biological role, atypical histone H2B that can form nucleosomes structurally and dynamically indistinguishable from those containing conventional H2B. Nucleosomes wrap and compact DNA into chromatin, limiting DNA accessibility to the cellular machineries which require DNA as a template. Histones thereby play a central role in transcription regulation, DNA repair, DNA replication and chromosomal stability. DNA accessibility is regulated via a complex set of post-translational modifications of histones, also called histone code, and nucleosome remodeling. However, unlike conventional H2B, does not recruit chromosome condensation factors and does not participate in the assembly of mitotic chromosomes. May be important for telomere function and play a role in spermatogenesis. In Homo sapiens (Human), this protein is Histone H2B type W-T.